Consider the following 167-residue polypeptide: Ureidoglycolate lyase (167 aa).

It belongs to the ureidoglycolate lyase family. In terms of assembly, homodimer. Requires Ni(2+) as cofactor.

It carries out the reaction (S)-ureidoglycolate = urea + glyoxylate. It participates in nitrogen metabolism; (S)-allantoin degradation. Catalyzes the catabolism of the allantoin degradation intermediate (S)-ureidoglycolate, generating urea and glyoxylate. Involved in the utilization of allantoin as nitrogen source. The chain is Ureidoglycolate lyase from Pseudomonas fluorescens (strain SBW25).